Consider the following 315-residue polypeptide: Porphobilinogen deaminase (315 aa).

C242 is modified (S-(dipyrrolylmethanemethyl)cysteine).

Belongs to the HMBS family. In terms of assembly, monomer. It depends on dipyrromethane as a cofactor.

The catalysed reaction is 4 porphobilinogen + H2O = hydroxymethylbilane + 4 NH4(+). It functions in the pathway porphyrin-containing compound metabolism; protoporphyrin-IX biosynthesis; coproporphyrinogen-III from 5-aminolevulinate: step 2/4. Tetrapolymerization of the monopyrrole PBG into the hydroxymethylbilane pre-uroporphyrinogen in several discrete steps. The chain is Porphobilinogen deaminase from Syntrophotalea carbinolica (strain DSM 2380 / NBRC 103641 / GraBd1) (Pelobacter carbinolicus).